The chain runs to 162 residues: Mitochondrial fission process protein 1 (162 aa).

A run of 3 helical transmembrane segments spans residues 36 to 56 (SLVKPVVVKFSYVVAFGYVAA), 81 to 101 (AIIAVDTVLWQTFASVLIPGF), and 128 to 148 (TVTALGLATIPFIVHPIDAFV).

The protein belongs to the MTFP1 family.

The protein resides in the mitochondrion inner membrane. Involved in the mitochondrial division probably by regulating membrane fission. Loss-of-function leads to apoptosis. In Caenorhabditis briggsae, this protein is Mitochondrial fission process protein 1.